A 1330-amino-acid chain; its full sequence is Major capsid protein (1330 aa).

Belongs to the herpesviridae major capsid protein family. In terms of assembly, homomultimer. Makes the hexons and eleven out of twelve pentons. Interacts with triplex proteins 1/TRX1 and 2/TRX2; adjacent capsomers are linked together in groups of three by triplexes, heterotrimeric complexes composed of one molecule of TRX1 and two molecules of TRX2. Interacts with scaffold protein; this interaction allows efficient MCP transport to the host nucleus. Interacts with capsid vertex component 2/CVC2. Interacts with the small capsomere-interacting protein/SCP.

It localises to the virion. It is found in the host nucleus. In terms of biological role, self-assembles to form an icosahedral capsid with a T=16 symmetry, about 200 nm in diameter, and consisting of 150 hexons and 12 pentons (total of 162 capsomers). Hexons form the edges and faces of the capsid and are each composed of six MCP molecules. In contrast, one penton is found at each of the 12 vertices. Eleven of the pentons are MCP pentamers, while the last vertex is occupied by the portal complex. The capsid is surrounded by a layer of proteinaceous material designated the tegument which, in turn, is enclosed in an envelope of host cell-derived lipids containing virus-encoded glycoproteins. The chain is Major capsid protein from Sus scrofa (Pig).